A 438-amino-acid polypeptide reads, in one-letter code: DNA primase DnaG (438 aa).

Residues 169–243 (DSIIVVEGRA…DIDYVARAPY (75 aa)) form the Toprim domain. Residues Glu175, Asp217, and Asp219 each coordinate Mg(2+).

The protein belongs to the archaeal DnaG primase family. Forms a ternary complex with MCM helicase and DNA. Mg(2+) is required as a cofactor.

The catalysed reaction is ssDNA + n NTP = ssDNA/pppN(pN)n-1 hybrid + (n-1) diphosphate.. In terms of biological role, RNA polymerase that catalyzes the synthesis of short RNA molecules used as primers for DNA polymerase during DNA replication. The protein is DNA primase DnaG of Methanococcus maripaludis (strain C6 / ATCC BAA-1332).